A 590-amino-acid polypeptide reads, in one-letter code: Transcription factor GTE7 (590 aa).

The tract at residues 125–160 (LNNFTGEKNDLGPKKKKQKKNVSGLKRSNQFGPSDP) is disordered. The region spanning 164 to 270 (KLLAGMLNTC…DHFDGMFNPA (107 aa)) is the Bromo domain. 2 disordered regions span residues 282 to 400 (TGSS…KDPN) and 476 to 590 (RQGF…EAQC). Basic and acidic residues predominate over residues 288-298 (PEPDFKPDFKQ). Residues 347-369 (PSPPPPPPVIQPELPQPQPPPPQ) show a composition bias toward pro residues. Positions 394-475 (PKAKDPNKRL…NYKKMASKIK (82 aa)) constitute an NET domain. Residues 498–508 (SAEKRTRRGDA) are compositionally biased toward basic and acidic residues. Over residues 509–521 (GEEDVDIGEDIPI) the composition is skewed to acidic residues. Residues 537–562 (AAAASSGSSSSGSSSSSGGSSSSSDS) show a composition bias toward low complexity.

It is found in the nucleus. In Arabidopsis thaliana (Mouse-ear cress), this protein is Transcription factor GTE7 (GTE7).